We begin with the raw amino-acid sequence, 122 residues long: Large ribosomal subunit protein uL14 (122 aa).

The protein belongs to the universal ribosomal protein uL14 family. As to quaternary structure, part of the 50S ribosomal subunit. Forms a cluster with proteins L3 and L19. In the 70S ribosome, L14 and L19 interact and together make contacts with the 16S rRNA in bridges B5 and B8.

Functionally, binds to 23S rRNA. Forms part of two intersubunit bridges in the 70S ribosome. The protein is Large ribosomal subunit protein uL14 of Brachyspira hyodysenteriae (strain ATCC 49526 / WA1).